Consider the following 141-residue polypeptide: NTDQSFPGFVGSEMWNPNTELSEDCLYLNVWIPAPKPKNATVMIWIYGGGFQTGTSSLHVYDGKFLSRVERVIVVSMNYRVGALGFLALPGNPEAPGNMGLFDQQLALQWVQKNIAAFGGNPKSVTLFGESAGAVSVSLHL.

N-linked (GlcNAc...) asparagine glycosylation occurs at Asn-39. A substrate-binding site is contributed by 49 to 50 (GG). Catalysis depends on Ser-131, which acts as the Acyl-ester intermediate. Ser-131 is modified (phosphoserine).

It belongs to the type-B carboxylesterase/lipase family. Homotetramer; disulfide-linked. Dimer of dimers. In terms of tissue distribution, present in most cells except erythrocytes.

Its subcellular location is the secreted. It catalyses the reaction an acylcholine + H2O = a carboxylate + choline + H(+). Its function is as follows. Esterase with broad substrate specificity. Contributes to the inactivation of the neurotransmitter acetylcholine. Can degrade neurotoxic organophosphate esters. This chain is Cholinesterase (BCHE), found in Sus scrofa (Pig).